A 161-amino-acid polypeptide reads, in one-letter code: Putative 2'-deoxynucleoside 5'-phosphate N-hydrolase 1 (161 aa).

Substrate-binding positions include 27 to 33, Tyr-42, His-60, Glu-106, and 128 to 130; these read FLSGSIR and SSM.

Belongs to the 2'-deoxynucleoside 5'-phosphate N-hydrolase 1 family. In terms of assembly, monomer and homodimer.

The catalysed reaction is a pyrimidine 2'-deoxyribonucleoside 5'-phosphate + H2O = a pyrimidine nucleobase + 2-deoxy-D-ribose 5-phosphate. It carries out the reaction a purine 2'-deoxyribonucleoside 5'-phosphate + H2O = a purine nucleobase + 2-deoxy-D-ribose 5-phosphate. Functionally, catalyzes the cleavage of the N-glycosidic bond of deoxyribonucleoside 5'-monophosphates to yield deoxyribose 5-phosphate and a purine or pyrimidine base. The sequence is that of Putative 2'-deoxynucleoside 5'-phosphate N-hydrolase 1 from Methanosarcina mazei (strain ATCC BAA-159 / DSM 3647 / Goe1 / Go1 / JCM 11833 / OCM 88) (Methanosarcina frisia).